A 232-amino-acid polypeptide reads, in one-letter code: Large ribosomal subunit protein uL1 (232 aa).

This sequence belongs to the universal ribosomal protein uL1 family. As to quaternary structure, part of the 50S ribosomal subunit.

Binds directly to 23S rRNA. The L1 stalk is quite mobile in the ribosome, and is involved in E site tRNA release. In terms of biological role, protein L1 is also a translational repressor protein, it controls the translation of the L11 operon by binding to its mRNA. The sequence is that of Large ribosomal subunit protein uL1 from Xanthobacter autotrophicus (strain ATCC BAA-1158 / Py2).